Reading from the N-terminus, the 727-residue chain is ATP-dependent RNA helicase Ddx1 (727 aa).

In terms of domain architecture, Helicase ATP-binding spans 2-428 (TAFEEFGVLP…AERLMHFPTW (427 aa)). Position 46–53 (46–53 (AETGSGKT)) interacts with ATP. The region spanning 69–246 (RDLEEGKAGK…MQFNFGKTDF (178 aa)) is the B30.2/SPRY domain. The short motif at 370 to 373 (DEAD) is the DEAD box element. A Helicase C-terminal domain is found at 483–676 (TLSQAVKLLK…QVDKTMDVPV (194 aa)).

It belongs to the DEAD box helicase family. DDX1 subfamily.

It catalyses the reaction ATP + H2O = ADP + phosphate + H(+). Its function is as follows. Acts as an ATP-dependent RNA helicase, able to unwind both RNA-RNA and RNA-DNA duplexes. Possesses 5' single-stranded RNA overhang nuclease activity. The protein is ATP-dependent RNA helicase Ddx1 (Ddx1) of Drosophila melanogaster (Fruit fly).